We begin with the raw amino-acid sequence, 243 residues long: Segregation and condensation protein A (243 aa).

This sequence belongs to the ScpA family. As to quaternary structure, component of a cohesin-like complex composed of ScpA, ScpB and the Smc homodimer, in which ScpA and ScpB bind to the head domain of Smc. The presence of the three proteins is required for the association of the complex with DNA.

It localises to the cytoplasm. Its function is as follows. Participates in chromosomal partition during cell division. May act via the formation of a condensin-like complex containing Smc and ScpB that pull DNA away from mid-cell into both cell halves. The protein is Segregation and condensation protein A of Staphylococcus haemolyticus (strain JCSC1435).